The sequence spans 121 residues: Small ribosomal subunit protein uS13 (121 aa).

The segment at 91 to 121 (HRMSLPVRGQRTRTNARTRRGSRKTVAGRKK) is disordered. Positions 100 to 121 (QRTRTNARTRRGSRKTVAGRKK) are enriched in basic residues.

It belongs to the universal ribosomal protein uS13 family. Part of the 30S ribosomal subunit. Forms a loose heterodimer with protein S19. Forms two bridges to the 50S subunit in the 70S ribosome.

In terms of biological role, located at the top of the head of the 30S subunit, it contacts several helices of the 16S rRNA. In the 70S ribosome it contacts the 23S rRNA (bridge B1a) and protein L5 of the 50S subunit (bridge B1b), connecting the 2 subunits; these bridges are implicated in subunit movement. Contacts the tRNAs in the A and P-sites. This chain is Small ribosomal subunit protein uS13, found in Prochlorococcus marinus (strain MIT 9312).